The following is a 233-amino-acid chain: 7-cyano-7-deazaguanine synthase (233 aa).

ATP is bound at residue 13–23 (LSGGLDSTTCL). Cys-197, Cys-206, Cys-209, and Cys-212 together coordinate Zn(2+).

This sequence belongs to the QueC family. The cofactor is Zn(2+).

It carries out the reaction 7-carboxy-7-deazaguanine + NH4(+) + ATP = 7-cyano-7-deazaguanine + ADP + phosphate + H2O + H(+). It participates in purine metabolism; 7-cyano-7-deazaguanine biosynthesis. Catalyzes the ATP-dependent conversion of 7-carboxy-7-deazaguanine (CDG) to 7-cyano-7-deazaguanine (preQ(0)). This chain is 7-cyano-7-deazaguanine synthase, found in Anaeromyxobacter sp. (strain Fw109-5).